Here is a 546-residue protein sequence, read N- to C-terminus: Chaperonin GroEL (546 aa).

Residues 29 to 32, Lys-50, 86 to 90, Gly-414, and Asp-492 each bind ATP; these read TMGP and DGTTT.

Belongs to the chaperonin (HSP60) family. In terms of assembly, forms a cylinder of 14 subunits composed of two heptameric rings stacked back-to-back. Interacts with the co-chaperonin GroES.

It is found in the cytoplasm. It catalyses the reaction ATP + H2O + a folded polypeptide = ADP + phosphate + an unfolded polypeptide.. Together with its co-chaperonin GroES, plays an essential role in assisting protein folding. The GroEL-GroES system forms a nano-cage that allows encapsulation of the non-native substrate proteins and provides a physical environment optimized to promote and accelerate protein folding. The polypeptide is Chaperonin GroEL (Helicobacter pylori (strain ATCC 700392 / 26695) (Campylobacter pylori)).